A 423-amino-acid polypeptide reads, in one-letter code: Gamma-glutamyl phosphate reductase (423 aa).

This sequence belongs to the gamma-glutamyl phosphate reductase family.

Its subcellular location is the cytoplasm. It carries out the reaction L-glutamate 5-semialdehyde + phosphate + NADP(+) = L-glutamyl 5-phosphate + NADPH + H(+). Its pathway is amino-acid biosynthesis; L-proline biosynthesis; L-glutamate 5-semialdehyde from L-glutamate: step 2/2. In terms of biological role, catalyzes the NADPH-dependent reduction of L-glutamate 5-phosphate into L-glutamate 5-semialdehyde and phosphate. The product spontaneously undergoes cyclization to form 1-pyrroline-5-carboxylate. This Burkholderia orbicola (strain MC0-3) protein is Gamma-glutamyl phosphate reductase.